Here is a 336-residue protein sequence, read N- to C-terminus: Probable RNA methyltransferase Anae109_4379 (336 aa).

Catalysis depends on Glu-86, which acts as the Proton acceptor. The 230-residue stretch at 93–322 (FDTHHTVCLS…PIVRRYSGGQ (230 aa)) folds into the Radical SAM core domain. Residues Cys-100 and Cys-328 are joined by a disulfide bond. [4Fe-4S] cluster is bound by residues Cys-107, Cys-111, and Cys-114. S-adenosyl-L-methionine is bound by residues 154 to 155 (GE), Ser-186, and 209 to 211 (SLN). Residue Cys-328 is the S-methylcysteine intermediate of the active site.

The protein belongs to the radical SAM superfamily. RlmN family. It depends on [4Fe-4S] cluster as a cofactor.

Its subcellular location is the cytoplasm. This chain is Probable RNA methyltransferase Anae109_4379, found in Anaeromyxobacter sp. (strain Fw109-5).